We begin with the raw amino-acid sequence, 672 residues long: tRNA(Met) cytidine acetyltransferase TmcA (672 aa).

ATP contacts are provided by residues Gln-180, 202–211 (GRGKSALAGQ), and Arg-319. In terms of domain architecture, N-acetyltransferase spans 349–531 (IEISAFYQQA…SGCYTAMALL (183 aa)). Acetyl-CoA contacts are provided by residues 461–463 (IAV), 468–474 (QREGIGQ), and Arg-506.

This sequence belongs to the RNA cytidine acetyltransferase family. TmcA subfamily.

It localises to the cytoplasm. It catalyses the reaction cytidine(34) in elongator tRNA(Met) + acetyl-CoA + ATP + H2O = N(4)-acetylcytidine(34) in elongator tRNA(Met) + ADP + phosphate + CoA + H(+). In terms of biological role, catalyzes the formation of N(4)-acetylcytidine (ac(4)C) at the wobble position of tRNA(Met), by using acetyl-CoA as an acetyl donor and ATP (or GTP). This chain is tRNA(Met) cytidine acetyltransferase TmcA, found in Salmonella typhimurium (strain LT2 / SGSC1412 / ATCC 700720).